The sequence spans 171 residues: NADH-quinone oxidoreductase subunit I 2 (171 aa).

2 4Fe-4S ferredoxin-type domains span residues 39 to 71 and 81 to 110; these read IVLTRDPDGQERCVACNLCAVACPVGCIDLSKA and EHFRINFARCIFCGYCEEACPTAAIQLTPD. [4Fe-4S] cluster is bound by residues Cys-51, Cys-54, Cys-57, Cys-61, Cys-90, Cys-93, Cys-96, and Cys-100.

It belongs to the complex I 23 kDa subunit family. As to quaternary structure, NDH-1 is composed of 14 different subunits. Subunits NuoA, H, J, K, L, M, N constitute the membrane sector of the complex. [4Fe-4S] cluster serves as cofactor.

It is found in the cell inner membrane. The catalysed reaction is a quinone + NADH + 5 H(+)(in) = a quinol + NAD(+) + 4 H(+)(out). Functionally, NDH-1 shuttles electrons from NADH, via FMN and iron-sulfur (Fe-S) centers, to quinones in the respiratory chain. The immediate electron acceptor for the enzyme in this species is believed to be ubiquinone. Couples the redox reaction to proton translocation (for every two electrons transferred, four hydrogen ions are translocated across the cytoplasmic membrane), and thus conserves the redox energy in a proton gradient. This is NADH-quinone oxidoreductase subunit I 2 from Rhodopseudomonas palustris (strain BisB18).